Consider the following 2253-residue polypeptide: Protein Ycf2 (2253 aa).

Residue 1600 to 1607 (GFIGTGRS) participates in ATP binding.

This sequence belongs to the Ycf2 family.

The protein resides in the plastid. It localises to the chloroplast stroma. Probable ATPase of unknown function. Its presence in a non-photosynthetic plant (Epifagus virginiana) and experiments in tobacco indicate that it has an essential function which is probably not related to photosynthesis. This is Protein Ycf2 from Nymphaea alba (White water-lily).